The sequence spans 79 residues: Pyridoxal 5'-phosphate synthase PDX1-like 4 (79 aa).

Belongs to the PdxS/SNZ family.

This Arabidopsis thaliana (Mouse-ear cress) protein is Pyridoxal 5'-phosphate synthase PDX1-like 4 (PDX1L4).